The chain runs to 790 residues: Polyribonucleotide nucleotidyltransferase (790 aa).

2 residues coordinate Mg(2+): D498 and D504. A KH domain is found at 565-624; the sequence is PRILRIKIKPEQIGEVIGPGGRVIRAIQEQTGTKISIEEDGTVFISAANEDAARRAVREI. Residues 634–702 enclose the S1 motif domain; sequence GEIFYGRVVT…PDGKINLSRK (69 aa). The interval 710-790 is disordered; sequence AERAATAQAP…KELLGEDEPN (81 aa). The segment covering 739-755 has biased composition (basic and acidic residues); that stretch reads PERRPGPPTPRRPEQRG. The segment covering 757–772 has biased composition (pro residues); sequence SRPPRPQAQRSTPPPG.

It belongs to the polyribonucleotide nucleotidyltransferase family. Mg(2+) is required as a cofactor.

The protein localises to the cytoplasm. It catalyses the reaction RNA(n+1) + phosphate = RNA(n) + a ribonucleoside 5'-diphosphate. In terms of biological role, involved in mRNA degradation. Catalyzes the phosphorolysis of single-stranded polyribonucleotides processively in the 3'- to 5'-direction. The sequence is that of Polyribonucleotide nucleotidyltransferase from Thermomicrobium roseum (strain ATCC 27502 / DSM 5159 / P-2).